A 200-amino-acid polypeptide reads, in one-letter code: 3-isopropylmalate dehydratase small subunit (200 aa).

Belongs to the LeuD family. LeuD type 1 subfamily. In terms of assembly, heterodimer of LeuC and LeuD.

The catalysed reaction is (2R,3S)-3-isopropylmalate = (2S)-2-isopropylmalate. Its pathway is amino-acid biosynthesis; L-leucine biosynthesis; L-leucine from 3-methyl-2-oxobutanoate: step 2/4. Catalyzes the isomerization between 2-isopropylmalate and 3-isopropylmalate, via the formation of 2-isopropylmaleate. The chain is 3-isopropylmalate dehydratase small subunit from Vibrio cholerae serotype O1 (strain ATCC 39541 / Classical Ogawa 395 / O395).